Reading from the N-terminus, the 63-residue chain is Large ribosomal subunit protein bL28 (63 aa).

It belongs to the bacterial ribosomal protein bL28 family.

The polypeptide is Large ribosomal subunit protein bL28 (Geobacter metallireducens (strain ATCC 53774 / DSM 7210 / GS-15)).